Reading from the N-terminus, the 316-residue chain is Phospholipase A1 4 (316 aa).

An N-terminal signal peptide occupies residues 1–4; sequence ADDL. The propeptide occupies 5 to 14; sequence TTLRNGTLDR. A disulfide bond links Cys-20 and Cys-103. Catalysis depends on Ser-153, which acts as the Nucleophile. Residue Asp-181 is the Charge relay system of the active site. 2 cysteine pairs are disulfide-bonded: Cys-192–Cys-197 and Cys-235–Cys-240. The active-site Charge relay system is His-242. 3 disulfides stabilise this stretch: Cys-257–Cys-284, Cys-258–Cys-309, and Cys-277–Cys-282.

The protein belongs to the AB hydrolase superfamily. Lipase family. As to expression, expressed by the venom gland.

The protein resides in the secreted. The catalysed reaction is a 1,2-diacyl-sn-glycero-3-phosphocholine + H2O = a 2-acyl-sn-glycero-3-phosphocholine + a fatty acid + H(+). In terms of biological role, catalyzes the hydrolysis of phosphatidylcholine with phospholipase A1 activity. May act as an allergen and induce hemolytic activity. In Polistes dominula (European paper wasp), this protein is Phospholipase A1 4.